Consider the following 259-residue polypeptide: Major cell-binding factor (259 aa).

The first 26 residues, 1 to 26 (MVFRKSLLKLAVFALGACVAFSNANA), serve as a signal peptide directing secretion.

Belongs to the bacterial solute-binding protein 3 family.

The protein resides in the cell surface. Functionally, common antigen and a major cell adherence molecule. Most probably involved, with PEB1C, in a binding-protein-dependent transport system for an amino acid. May be involved in binding to intestinal cells. The sequence is that of Major cell-binding factor (peb1A) from Campylobacter jejuni subsp. jejuni serotype O:2 (strain ATCC 700819 / NCTC 11168).